The primary structure comprises 427 residues: MKLIARLMSMCAVLFFAINSAYADDEVRIVIDEGVEGARPIAVVPFKSNGSVPADIAEIITADLRNSGKFNPIPVNQMPQQPGSASEVTPDAWASLGIDAVVVGQVTASGNGYQIAYQLVDTVGASGNAGAVLAQNSLTVQPKWIRWGAHQVSDEVFEKMTGIKGAFRTRIAYVVQRNAGSHELRIADYDGFNQFVVTRSSQPIMSPAWSPDGQRLAYVSFENRKSQLVVHNLGSGQRKVVAAFRGHNGAPAFSPDGSRLAFANNQDGLLNIYVMNSNGGHPTKLTGGAGNNTEPSWTQDGRILFTSDRSGSPQVYSMSSSGGGATLIGGGRSYSGQMSSDGKTLVMISGDNVVKYDTTTGTSEVLSSTFLDESPSISPNGIMIIYSSTQGLGKVLQLVSADGRFKARLPGSDGQVKFPAWSPYLTK.

Residues 1–23 (MKLIARLMSMCAVLFFAINSAYA) form the signal peptide.

It belongs to the TolB family. The Tol-Pal system is composed of five core proteins: the inner membrane proteins TolA, TolQ and TolR, the periplasmic protein TolB and the outer membrane protein Pal. They form a network linking the inner and outer membranes and the peptidoglycan layer.

It is found in the periplasm. Functionally, part of the Tol-Pal system, which plays a role in outer membrane invagination during cell division and is important for maintaining outer membrane integrity. In Actinobacillus succinogenes (strain ATCC 55618 / DSM 22257 / CCUG 43843 / 130Z), this protein is Tol-Pal system protein TolB.